The sequence spans 1349 residues: Aldehyde oxidase 2 (1349 aa).

Positions 8–96 (DELVFFVNGR…GAAVTTVEGV (89 aa)) constitute a 2Fe-2S ferredoxin-type domain. 4 residues coordinate [2Fe-2S] cluster: Cys-47, Cys-52, Cys-55, and Cys-78. Residue Gln-117 participates in Mo-molybdopterin binding. Residues Cys-118, Cys-121, Cys-153, and Cys-155 each coordinate [2Fe-2S] cluster. Cys-155 contacts Mo-molybdopterin. In terms of domain architecture, FAD-binding PCMH-type spans 240–425 (FYGERVTWIS…ESVHIPHSQK (186 aa)). FAD-binding positions include 268-275 (LVVGNTSL), Ala-349, Ser-358, His-362, Asp-371, and Leu-415. Mo-molybdopterin is bound by residues 816-817 (GF), 1098-1101 (ASVG), Gln-1213, and Leu-1278. The Proton acceptor; for azaheterocycle hydroxylase activity role is filled by Glu-1280.

This sequence belongs to the xanthine dehydrogenase family. Homodimer. [2Fe-2S] cluster serves as cofactor. It depends on FAD as a cofactor. The cofactor is Mo-molybdopterin. As to expression, only detected at very few levels in nasal mucosa.

Its subcellular location is the cytoplasm. It catalyses the reaction an aldehyde + O2 + H2O = a carboxylate + H2O2 + H(+). Its function is as follows. Oxidase with broad substrate specificity, oxidizing aromatic azaheterocycles, such as phthalazine, as well as aldehydes, such as benzaldehyde and retinal. The polypeptide is Aldehyde oxidase 2 (AOX2) (Macaca fascicularis (Crab-eating macaque)).